Consider the following 1007-residue polypeptide: Probable beta-galactosidase A (1007 aa).

An N-terminal signal peptide occupies residues 1-18 (MRLLPVWTAALLAAQAAG). Positions 96, 140, 141, and 142 each coordinate substrate. The N-linked (GlcNAc...) asparagine glycan is linked to N156. N199 contacts substrate. Residue E200 is the Proton donor of the active site. C205 and C206 are joined by a disulfide. Y260 is a binding site for substrate. A disulfide bond links C266 and C315. The active-site Nucleophile is the E298. A substrate-binding site is contributed by Y364. N405, N422, N621, N740, N775, and N914 each carry an N-linked (GlcNAc...) asparagine glycan.

This sequence belongs to the glycosyl hydrolase 35 family.

The protein resides in the secreted. The enzyme catalyses Hydrolysis of terminal non-reducing beta-D-galactose residues in beta-D-galactosides.. Functionally, cleaves beta-linked terminal galactosyl residues from gangliosides, glycoproteins, and glycosaminoglycans. This chain is Probable beta-galactosidase A (lacA), found in Emericella nidulans (strain FGSC A4 / ATCC 38163 / CBS 112.46 / NRRL 194 / M139) (Aspergillus nidulans).